The chain runs to 285 residues: Glutamate racemase (285 aa).

Substrate contacts are provided by residues 28-29 (DS) and 60-61 (YG). Cys-92 (proton donor/acceptor) is an active-site residue. 93–94 (NT) is a binding site for substrate. The active-site Proton donor/acceptor is Cys-204. 205–206 (TH) contacts substrate.

The protein belongs to the aspartate/glutamate racemases family.

The enzyme catalyses L-glutamate = D-glutamate. The protein operates within cell wall biogenesis; peptidoglycan biosynthesis. Its function is as follows. Provides the (R)-glutamate required for cell wall biosynthesis. The polypeptide is Glutamate racemase (Shigella flexneri serotype 5b (strain 8401)).